We begin with the raw amino-acid sequence, 200 residues long: BREX protein BrxA (200 aa).

It belongs to the BrxA family.

In terms of biological role, BREX systems (bacteriophage exclusion) provide immunity against bacteriophage. Part of a type 1 BREX system. This system allows phage adsorption but prevents phage DNA replication, without degradation of the phage DNA. Methylation of bacterial DNA by PglX probably guides self/non-self discrimination. When the brxA-brxB-brxC-pglX and pglZ-brxL operons are transformed into a susceptible B.subtilis strain (BEST7003) they confer resistance to bacteriophages SPbeta, SP16, Zeta, phi3T and SP02 and partial protection to phages SP01 and SP82G (these include lytic and temperate phage). They do not protect against phages phi105, rho10 or rho14. Additionally confers a very slight reduction in efficiency of plasmid transformation. This chain is BREX protein BrxA, found in Bacillus cereus (strain H3081.97).